The sequence spans 123 residues: Histone H2B (123 aa).

Residues 1–32 are disordered; it reads MAPKAPGKGAKKAAKSKAPRAPGDRKRKRTRR. Positions 9-18 are enriched in basic residues; it reads GAKKAAKSKA. Residue S110 is glycosylated (O-linked (GlcNAc) serine). K118 is covalently cross-linked (Glycyl lysine isopeptide (Lys-Gly) (interchain with G-Cter in ubiquitin)).

The protein belongs to the histone H2B family. In terms of assembly, the nucleosome is a histone octamer containing two molecules each of H2A, H2B, H3 and H4 assembled in one H3-H4 heterotetramer and two H2A-H2B heterodimers. The octamer wraps approximately 147 bp of DNA. In terms of processing, monoubiquitination of Lys-118 gives a specific tag for epigenetic transcriptional activation and is also prerequisite for histone H3 'Lys-4' and 'Lys-79' methylation. Post-translationally, glcNAcylation at Ser-110 promotes monoubiquitination of Lys-118. It fluctuates in response to extracellular glucose, and associates with transcribed genes.

Its subcellular location is the nucleus. The protein resides in the chromosome. Its function is as follows. Core component of nucleosome. Nucleosomes wrap and compact DNA into chromatin, limiting DNA accessibility to the cellular machineries which require DNA as a template. Histones thereby play a central role in transcription regulation, DNA repair, DNA replication and chromosomal stability. DNA accessibility is regulated via a complex set of post-translational modifications of histones, also called histone code, and nucleosome remodeling. This Holothuria tubulosa (Tubular sea cucumber) protein is Histone H2B.